The following is a 132-amino-acid chain: Small ribosomal subunit protein uS8 (132 aa).

It belongs to the universal ribosomal protein uS8 family. As to quaternary structure, part of the 30S ribosomal subunit. Contacts proteins S5 and S12.

In terms of biological role, one of the primary rRNA binding proteins, it binds directly to 16S rRNA central domain where it helps coordinate assembly of the platform of the 30S subunit. This Borrelia turicatae (strain 91E135) protein is Small ribosomal subunit protein uS8.